The chain runs to 57 residues: Ribulose bisphosphate carboxylase large chain (57 aa).

Positions 1–2 (MS) are excised as a propeptide. P3 carries the post-translational modification N-acetylproline. K14 is subject to N6,N6,N6-trimethyllysine.

This sequence belongs to the RuBisCO large chain family. Type I subfamily. As to quaternary structure, heterohexadecamer of 8 large chains and 8 small chains.

It localises to the plastid. The protein localises to the chloroplast. The enzyme catalyses 2 (2R)-3-phosphoglycerate + 2 H(+) = D-ribulose 1,5-bisphosphate + CO2 + H2O. The catalysed reaction is D-ribulose 1,5-bisphosphate + O2 = 2-phosphoglycolate + (2R)-3-phosphoglycerate + 2 H(+). Functionally, ruBisCO catalyzes two reactions: the carboxylation of D-ribulose 1,5-bisphosphate, the primary event in carbon dioxide fixation, as well as the oxidative fragmentation of the pentose substrate in the photorespiration process. Both reactions occur simultaneously and in competition at the same active site. This Camellia sinensis (Tea plant) protein is Ribulose bisphosphate carboxylase large chain (rbcL).